The following is a 299-amino-acid chain: uncharacterized protein (299 aa).

A helical membrane pass occupies residues 4-20 (LFFIFVMLIVLLCGCTS).

It is found in the membrane. This is an uncharacterized protein from Methanocaldococcus jannaschii (strain ATCC 43067 / DSM 2661 / JAL-1 / JCM 10045 / NBRC 100440) (Methanococcus jannaschii).